The primary structure comprises 34 residues: Sperm protein EM1 (34 aa).

Residues 1 to 17 show a composition bias toward basic residues; it reads AGSKSRSRSRSRSRSKS. The tract at residues 1–34 is disordered; sequence AGSKSRSRSRSRSRSKSPAKSASPKSAASPRASR. Tandem repeats lie at residues 3–4, 5–6, 7–8, 9–10, 11–12, 13–14, and 15–16. Positions 3 to 16 are 7 X 2 AA tandem repeats of S-[KR]; sequence SKSRSRSRSRSRSK. Positions 18 to 34 are enriched in low complexity; it reads PAKSASPKSAASPRASR.

In terms of tissue distribution, sperm.

It is found in the nucleus. This Ensis minor (Razor shell) protein is Sperm protein EM1.